Reading from the N-terminus, the 232-residue chain is Fibrillarin-like rRNA/tRNA 2'-O-methyltransferase (232 aa).

S-adenosyl-L-methionine-binding positions include 89–90, 108–109, 133–134, and 153–156; these read TT, EF, DA, and DIAQ.

It belongs to the methyltransferase superfamily. Fibrillarin family. As to quaternary structure, interacts with nop5. Component of box C/D small ribonucleoprotein (sRNP) particles that contain rpl7ae, FlpA and nop5, plus a guide RNA.

In terms of biological role, involved in pre-rRNA and tRNA processing. Utilizes the methyl donor S-adenosyl-L-methionine to catalyze the site-specific 2'-hydroxyl methylation of ribose moieties in rRNA and tRNA. Site specificity is provided by a guide RNA that base pairs with the substrate. Methylation occurs at a characteristic distance from the sequence involved in base pairing with the guide RNA. This chain is Fibrillarin-like rRNA/tRNA 2'-O-methyltransferase, found in Methanopyrus kandleri (strain AV19 / DSM 6324 / JCM 9639 / NBRC 100938).